We begin with the raw amino-acid sequence, 228 residues long: Auxin-responsive protein IAA14 (228 aa).

The short motif at 8-12 is the EAR-like (transcriptional repression) element; it reads LCLGL. The PB1 domain maps to 110 to 210; it reads VAFVKVSMDG…SCKRLRIMKG (101 aa).

The protein belongs to the Aux/IAA family. Homodimers and heterodimers. Interacts with TPL. In terms of tissue distribution, preferentially expressed in roots and flowers.

Its subcellular location is the nucleus. Functionally, aux/IAA proteins are short-lived transcriptional factors that function as repressors of early auxin response genes at low auxin concentrations. Repression is thought to result from the interaction with auxin response factors (ARFs), proteins that bind to the auxin-responsive promoter element (AuxRE). Formation of heterodimers with ARF proteins may alter their ability to modulate early auxin response genes expression. This chain is Auxin-responsive protein IAA14 (IAA14), found in Arabidopsis thaliana (Mouse-ear cress).